The following is a 396-amino-acid chain: Elongation factor Tu 1 (396 aa).

The region spanning Lys-10–Glu-206 is the tr-type G domain. Residues Gly-19–Thr-26 form a G1 region. Residue Gly-19–Thr-26 coordinates GTP. Thr-26 lines the Mg(2+) pocket. The segment at Gly-60–Asn-64 is G2. Positions Asp-81–Gly-84 are G3. Residues Asp-81–His-85 and Asn-136–Asp-139 each bind GTP. The G4 stretch occupies residues Asn-136 to Asp-139. The tract at residues Ser-174–Lys-176 is G5.

Belongs to the TRAFAC class translation factor GTPase superfamily. Classic translation factor GTPase family. EF-Tu/EF-1A subfamily. Monomer.

It is found in the cytoplasm. It catalyses the reaction GTP + H2O = GDP + phosphate + H(+). Functionally, GTP hydrolase that promotes the GTP-dependent binding of aminoacyl-tRNA to the A-site of ribosomes during protein biosynthesis. This is Elongation factor Tu 1 from Acidovorax sp. (strain JS42).